We begin with the raw amino-acid sequence, 912 residues long: Eukaryotic translation initiation factor 3 subunit C (912 aa).

The tract at residues Met1–Asp44 is disordered. Low complexity predominate over residues Gly8–Glu21. Residues Ser9, Ser11, Ser13, Ser15, Ser16, Ser18, and Ser39 each carry the phosphoserine modification. Lys99 is subject to N6-acetyllysine. 2 disordered regions span residues Thr157–Gly305 and Gln521–Glu541. Phosphoserine occurs at positions 166, 178, 181, and 182. Residues Ser166–Gly190 are compositionally biased toward acidic residues. Residues Lys199–Glu215 show a composition bias toward basic and acidic residues. Over residues Asp216 to Ala229 the composition is skewed to acidic residues. Residues Pro260 to Ala277 are compositionally biased toward basic and acidic residues. Residues Gln521 to Lys530 are compositionally biased toward polar residues. Thr523 is modified (phosphothreonine). Position 642 is an N6-acetyllysine (Lys642). The PCI domain occupies Phe672 to Pro848. The segment at Phe884–Tyr912 is disordered. Positions Arg885–Met898 are enriched in basic and acidic residues. Phosphoserine is present on Ser908.

Belongs to the eIF-3 subunit C family. Component of the eukaryotic translation initiation factor 3 (eIF-3) complex, which is composed of 13 subunits: EIF3A, EIF3B, EIF3C, EIF3D, EIF3E, EIF3F, EIF3G, EIF3H, EIF3I, EIF3J, EIF3K, EIF3L and EIF3M. The eIF-3 complex appears to include 3 stable modules: module A is composed of EIF3A, EIF3B, EIF3G and EIF3I; module B is composed of EIF3F, EIF3H, and EIF3M; and module C is composed of EIF3C, EIF3D, EIF3E, EIF3K and EIF3L. EIF3C of module C binds EIF3B of module A and EIF3H of module B, thereby linking the three modules. EIF3J is a labile subunit that binds to the eIF-3 complex via EIF3B. The eIF-3 complex interacts with RPS6KB1 under conditions of nutrient depletion. Mitogenic stimulation leads to binding and activation of a complex composed of MTOR and RPTOR, leading to phosphorylation and release of RPS6KB1 and binding of EIF4B to eIF-3. Identified in a HCV IRES-mediated translation complex, at least composed of EIF3C, IGF2BP1, RPS3 and HCV RNA-replicon. Interacts with ALKBH4, IFIT1 and IFIT2. Interacts with BZW2/5MP1. Phosphorylated. Phosphorylation is enhanced upon serum stimulation.

The protein resides in the cytoplasm. Component of the eukaryotic translation initiation factor 3 (eIF-3) complex, which is required for several steps in the initiation of protein synthesis. The eIF-3 complex associates with the 40S ribosome and facilitates the recruitment of eIF-1, eIF-1A, eIF-2:GTP:methionyl-tRNAi and eIF-5 to form the 43S pre-initiation complex (43S PIC). The eIF-3 complex stimulates mRNA recruitment to the 43S PIC and scanning of the mRNA for AUG recognition. The eIF-3 complex is also required for disassembly and recycling of post-termination ribosomal complexes and subsequently prevents premature joining of the 40S and 60S ribosomal subunits prior to initiation. The eIF-3 complex specifically targets and initiates translation of a subset of mRNAs involved in cell proliferation, including cell cycling, differentiation and apoptosis, and uses different modes of RNA stem-loop binding to exert either translational activation or repression. The protein is Eukaryotic translation initiation factor 3 subunit C of Bos taurus (Bovine).